We begin with the raw amino-acid sequence, 513 residues long: Histidine ammonia-lyase (513 aa).

The segment at residues 144–146 (ASG) is a cross-link (5-imidazolinone (Ala-Gly)). Position 145 is a 2,3-didehydroalanine (Ser) (Ser-145).

This sequence belongs to the PAL/histidase family. In terms of processing, contains an active site 4-methylidene-imidazol-5-one (MIO), which is formed autocatalytically by cyclization and dehydration of residues Ala-Ser-Gly.

It is found in the cytoplasm. The enzyme catalyses L-histidine = trans-urocanate + NH4(+). The protein operates within amino-acid degradation; L-histidine degradation into L-glutamate; N-formimidoyl-L-glutamate from L-histidine: step 1/3. The chain is Histidine ammonia-lyase from Streptococcus pyogenes serotype M1.